The sequence spans 243 residues: ATP synthase subunit b, mitochondrial (243 aa).

Belongs to the eukaryotic ATPase B chain family. As to quaternary structure, F-type ATPases have 2 components, CF(1) - the catalytic core - and CF(0) - the membrane proton channel. CF(1) has five subunits: alpha(3), beta(3), gamma(1), delta(1), epsilon(1). CF(0) has three main subunits: a, b and c.

The protein localises to the mitochondrion. The protein resides in the mitochondrion inner membrane. Functionally, mitochondrial membrane ATP synthase (F(1)F(0) ATP synthase or Complex V) produces ATP from ADP in the presence of a proton gradient across the membrane which is generated by electron transport complexes of the respiratory chain. F-type ATPases consist of two structural domains, F(1) - containing the extramembraneous catalytic core, and F(0) - containing the membrane proton channel, linked together by a central stalk and a peripheral stalk. During catalysis, ATP synthesis in the catalytic domain of F(1) is coupled via a rotary mechanism of the central stalk subunits to proton translocation. Part of the complex F(0) domain and the peripheric stalk, which acts as a stator to hold the catalytic alpha(3)beta(3) subcomplex and subunit a/ATP6 static relative to the rotary elements. In Drosophila melanogaster (Fruit fly), this protein is ATP synthase subunit b, mitochondrial.